A 396-amino-acid polypeptide reads, in one-letter code: Aldo-keto reductase ausK (396 aa).

NADP(+) is bound at residue D76. Y81 (proton donor) is an active-site residue. H156 lines the substrate pocket. NADP(+)-binding positions include C186 to N187, Q212, D241 to R251, and R317 to N325.

It belongs to the aldo/keto reductase family. Aldo/keto reductase 2 subfamily. As to quaternary structure, homodimer.

It participates in secondary metabolite biosynthesis; terpenoid biosynthesis. In terms of biological role, aldo-keto reductase; part of the gene cluster that mediates the biosynthesis of calidodehydroaustin, a fungal meroterpenoid. The first step of the pathway is the synthesis of 3,5-dimethylorsellinic acid by the polyketide synthase ausA. 3,5-dimethylorsellinic acid is then prenylated by the polyprenyl transferase ausN. Further epoxidation by the FAD-dependent monooxygenase ausM and cyclization by the probable terpene cyclase ausL lead to the formation of protoaustinoid A. Protoaustinoid A is then oxidized to spiro-lactone preaustinoid A3 by the combined action of the FAD-binding monooxygenases ausB and ausC, and the dioxygenase ausE. Acid-catalyzed keto-rearrangement and ring contraction of the tetraketide portion of preaustinoid A3 by ausJ lead to the formation of preaustinoid A4. The aldo-keto reductase ausK, with the help of ausH, is involved in the next step by transforming preaustinoid A4 into isoaustinone which is in turn hydroxylated by the P450 monooxygenase ausI to form austinolide. The cytochrome P450 monooxygenase ausG modifies austinolide to austinol. Austinol is further acetylated to austin by the O-acetyltransferase ausP, which spontaneously changes to dehydroaustin. The cytochrome P450 monooxygenase ausR then converts dehydroaustin is into 7-dehydrodehydroaustin. The hydroxylation catalyzed by ausR permits the O-acetyltransferase ausQ to add an additional acetyl group to the molecule, leading to the formation of acetoxydehydroaustin. The short chain dehydrogenase ausT catalyzes the reduction of the double bond present between carbon atoms 1 and 2 to convert 7-dehydrodehydroaustin into 1,2-dihydro-7-hydroxydehydroaustin. AusQ catalyzes not only an acetylation reaction but also the addition of the PKS ausV diketide product to 1,2-dihydro-7-hydroxydehydroaustin, forming precalidodehydroaustin. Finally, the iron/alpha-ketoglutarate-dependent dioxygenase converts precalidodehydroaustin into calidodehydroaustin. This Aspergillus calidoustus protein is Aldo-keto reductase ausK.